Here is a 255-residue protein sequence, read N- to C-terminus: Pyridoxine 5'-phosphate synthase (255 aa).

N12 contacts 3-amino-2-oxopropyl phosphate. 14 to 15 (DH) serves as a coordination point for 1-deoxy-D-xylulose 5-phosphate. R23 is a 3-amino-2-oxopropyl phosphate binding site. The active-site Proton acceptor is the H48. Positions 50 and 55 each coordinate 1-deoxy-D-xylulose 5-phosphate. E75 functions as the Proton acceptor in the catalytic mechanism. T105 is a binding site for 1-deoxy-D-xylulose 5-phosphate. H199 functions as the Proton donor in the catalytic mechanism. Residues G200 and 221-222 (GF) each bind 3-amino-2-oxopropyl phosphate.

It belongs to the PNP synthase family. Homooctamer; tetramer of dimers.

It localises to the cytoplasm. It carries out the reaction 3-amino-2-oxopropyl phosphate + 1-deoxy-D-xylulose 5-phosphate = pyridoxine 5'-phosphate + phosphate + 2 H2O + H(+). Its pathway is cofactor biosynthesis; pyridoxine 5'-phosphate biosynthesis; pyridoxine 5'-phosphate from D-erythrose 4-phosphate: step 5/5. In terms of biological role, catalyzes the complicated ring closure reaction between the two acyclic compounds 1-deoxy-D-xylulose-5-phosphate (DXP) and 3-amino-2-oxopropyl phosphate (1-amino-acetone-3-phosphate or AAP) to form pyridoxine 5'-phosphate (PNP) and inorganic phosphate. This is Pyridoxine 5'-phosphate synthase from Rhodopseudomonas palustris (strain BisB18).